The chain runs to 313 residues: Aspartate carbamoyltransferase catalytic subunit (313 aa).

The carbamoyl phosphate site is built by Arg-58 and Thr-59. Lys-86 contributes to the L-aspartate binding site. Carbamoyl phosphate-binding residues include Arg-108, His-136, and Gln-139. L-aspartate-binding residues include Arg-169 and Arg-224. Gly-265 and Pro-266 together coordinate carbamoyl phosphate.

Belongs to the aspartate/ornithine carbamoyltransferase superfamily. ATCase family. Heterododecamer (2C3:3R2) of six catalytic PyrB chains organized as two trimers (C3), and six regulatory PyrI chains organized as three dimers (R2).

It carries out the reaction carbamoyl phosphate + L-aspartate = N-carbamoyl-L-aspartate + phosphate + H(+). It participates in pyrimidine metabolism; UMP biosynthesis via de novo pathway; (S)-dihydroorotate from bicarbonate: step 2/3. In terms of biological role, catalyzes the condensation of carbamoyl phosphate and aspartate to form carbamoyl aspartate and inorganic phosphate, the committed step in the de novo pyrimidine nucleotide biosynthesis pathway. This Natranaerobius thermophilus (strain ATCC BAA-1301 / DSM 18059 / JW/NM-WN-LF) protein is Aspartate carbamoyltransferase catalytic subunit.